The chain runs to 180 residues: CASP-like protein XL3 (180 aa).

The Cytoplasmic segment spans residues 1 to 7 (MELSIQK). Residues 8-28 (IEALIRLSTIVMLVLTACLIG) form a helical membrane-spanning segment. Over 29 to 49 (LDSQTKVIFYVQKKASFKDLR) the chain is Extracellular. The helical transmembrane segment at 50–70 (ALVGLLYITSLAAAYNLLQLC) threads the bilayer. Residues 71 to 98 (CSSFSASYKGTSLQSYAYLAWLRYILDQ) lie on the Cytoplasmic side of the membrane. A helical transmembrane segment spans residues 99–119 (AVVYAVFAGNLAALEHSFLVL). Residues 120–140 (TGEENFQWLKWCNKYTRFCTQ) lie on the Extracellular side of the membrane. Residues 141–161 (IGGSLLCGFVASLLMFSIASI) traverse the membrane as a helical segment. Over 162 to 180 (SAFNLFRQYSPTKFMHLKL) the chain is Cytoplasmic.

The protein belongs to the Casparian strip membrane proteins (CASP) family. Homodimer and heterodimers.

The protein resides in the cell membrane. This chain is CASP-like protein XL3 (XL3), found in Gossypium hirsutum (Upland cotton).